A 265-amino-acid chain; its full sequence is Secreted RxLR effector protein 16 (265 aa).

Positions 1–19 are cleaved as a signal peptide; it reads MRGAFYIAIALLIVRSRTA. The short motif at 46–61 is the RxLR-dEER element; the sequence is RYLRGGLALSATNEER. N170, N219, and N240 each carry an N-linked (GlcNAc...) asparagine glycan.

This sequence belongs to the RxLR effector family. N-glycosylated. The putative N-glycosylation site at position 240 is essential for cell death-inducing activity.

It localises to the secreted. The protein localises to the host nucleus. Its function is as follows. Effector that acts as an elicitor that induces cell death and promotes ROS accumulation in Nicotian benthamiana. RxLR16-triggered cell death is dependent on SGT1, HSP90 and RAR1, but independent of the somatic embryogenesis receptor-like kinase SERK3/BAK1, indicating that it acts independently of the detection of cell surface pattern recognition receptors. Enhances the expressional levels of defense-associated genes involved in the salicylic acid-, jasmonate acid-, and ethylene-mediated signal transduction, resulting in disease resistance. However, as some other Plasmopara viticola RxLR effectors including RxLR1, RxLR10, RxLR30 and RxLR25, can suppress defense responses and disease resistance induced by RxLR16, it may not trigger host cell death or immune responses during physiological infection under natural conditions. The polypeptide is Secreted RxLR effector protein 16 (Plasmopara viticola (Downy mildew of grapevine)).